The following is a 425-amino-acid chain: Enolase (425 aa).

Position 163 (Q163) interacts with (2R)-2-phosphoglycerate. Catalysis depends on E205, which acts as the Proton donor. 3 residues coordinate Mg(2+): D242, E285, and D312. Residues K337, R366, S367, and K388 each coordinate (2R)-2-phosphoglycerate. Catalysis depends on K337, which acts as the Proton acceptor.

This sequence belongs to the enolase family. Requires Mg(2+) as cofactor.

The protein resides in the cytoplasm. The protein localises to the secreted. It localises to the cell surface. The enzyme catalyses (2R)-2-phosphoglycerate = phosphoenolpyruvate + H2O. The protein operates within carbohydrate degradation; glycolysis; pyruvate from D-glyceraldehyde 3-phosphate: step 4/5. Catalyzes the reversible conversion of 2-phosphoglycerate (2-PG) into phosphoenolpyruvate (PEP). It is essential for the degradation of carbohydrates via glycolysis. This is Enolase from Paracoccus denitrificans (strain Pd 1222).